We begin with the raw amino-acid sequence, 248 residues long: Isoprenyl transferase (248 aa).

Asp23 is an active-site residue. Asp23 contributes to the Mg(2+) binding site. Substrate-binding positions include 24-27, Trp28, Arg36, His40, and 68-70; these read GNGR and STE. Asn71 (proton acceptor) is an active-site residue. Residues Trp72, Arg74, Arg185, and 191 to 193 contribute to the substrate site; that span reads RIS. Residue Glu204 participates in Mg(2+) binding.

This sequence belongs to the UPP synthase family. Homodimer. The cofactor is Mg(2+).

Its function is as follows. Catalyzes the condensation of isopentenyl diphosphate (IPP) with allylic pyrophosphates generating different type of terpenoids. This chain is Isoprenyl transferase, found in Neisseria meningitidis serogroup A / serotype 4A (strain DSM 15465 / Z2491).